Here is a 361-residue protein sequence, read N- to C-terminus: MTHQQTLPTTAASFLMAGGGTGGHVIPALAVARELRSRGHKVFFVGTQHGMEARLVPPEGFEFKTIEIGGLNQVSWNQKFATLSRLPITTLKCGRSVRDASAVFSMGGYVAGPPVMAALVRRVPVVVMEPNAFPGFTNRVIARLVSRALVSFPETAAFFPKGRTEVTGLPVREEFFRIPPKARGDVLQILITGGSQGSRTLNHAARQSWPLFRNSGYPVRITHQTGTGSFQEIRDAFAQSGLEGEVVPFIADMPAAFAAADLIVCRSGAGTVSELAAAGKPSILVPFPFAADDHQTRNAQSLERAGAARLVRDAEMTGEKFFEVVTSVTGELSRMGTAARQFAKPGAAKRAADILEEVARP.

Residues 21–23, asparagine 131, arginine 172, serine 195, isoleucine 250, and glutamine 295 each bind UDP-N-acetyl-alpha-D-glucosamine; that span reads TGG.

Belongs to the glycosyltransferase 28 family. MurG subfamily.

The protein resides in the cell inner membrane. It carries out the reaction di-trans,octa-cis-undecaprenyl diphospho-N-acetyl-alpha-D-muramoyl-L-alanyl-D-glutamyl-meso-2,6-diaminopimeloyl-D-alanyl-D-alanine + UDP-N-acetyl-alpha-D-glucosamine = di-trans,octa-cis-undecaprenyl diphospho-[N-acetyl-alpha-D-glucosaminyl-(1-&gt;4)]-N-acetyl-alpha-D-muramoyl-L-alanyl-D-glutamyl-meso-2,6-diaminopimeloyl-D-alanyl-D-alanine + UDP + H(+). The protein operates within cell wall biogenesis; peptidoglycan biosynthesis. In terms of biological role, cell wall formation. Catalyzes the transfer of a GlcNAc subunit on undecaprenyl-pyrophosphoryl-MurNAc-pentapeptide (lipid intermediate I) to form undecaprenyl-pyrophosphoryl-MurNAc-(pentapeptide)GlcNAc (lipid intermediate II). The chain is UDP-N-acetylglucosamine--N-acetylmuramyl-(pentapeptide) pyrophosphoryl-undecaprenol N-acetylglucosamine transferase from Solibacter usitatus (strain Ellin6076).